The following is a 312-amino-acid chain: Bifunctional pinoresinol-lariciresinol reductase (312 aa).

NADP(+) is bound by residues 10–16 (GGTGYLG), Arg-35, and Lys-44. The active-site Proton acceptor is Lys-139. NADP(+) is bound at residue Arg-143. His-271 contributes to the substrate binding site.

This sequence belongs to the NmrA-type oxidoreductase family. Isoflavone reductase subfamily. Dimer. Expressed in young stems, young roots and petioles. In stems, expressed in radial parenchyma cells and in the cambial cells of developing secondary xylem.

The catalysed reaction is (+)-lariciresinol + NADP(+) = (+)-pinoresinol + NADPH + H(+). The enzyme catalyses (-)-secoisolariciresinol + NADP(+) = (+)-lariciresinol + NADPH + H(+). Reductase involved in lignan biosynthesis. Catalyzes the enantioselective sequential conversion of (+)-pinoresinol into (+)-lariciresinol and of (+)-lariciresinol into (-)-secoisolariciresinol. Abstracts the 4R-hydride from the NADPH cofactor during catalysis. This is Bifunctional pinoresinol-lariciresinol reductase (PLR_Fi1) from Forsythia intermedia (Border forsythia).